Reading from the N-terminus, the 166-residue chain is EEF1A lysine methyltransferase 1 (166 aa).

The protein belongs to the class I-like SAM-binding methyltransferase superfamily. EFM5 family.

It is found in the cytoplasm. The catalysed reaction is L-lysyl-[protein] + 3 S-adenosyl-L-methionine = N(6),N(6),N(6)-trimethyl-L-lysyl-[protein] + 3 S-adenosyl-L-homocysteine + 3 H(+). Protein-lysine methyltransferase that selectively catalyzes the trimethylation of EEF1A at 'Lys-79'. This Danio rerio (Zebrafish) protein is EEF1A lysine methyltransferase 1.